Reading from the N-terminus, the 199-residue chain is Fe/S biogenesis protein NfuA (199 aa).

[4Fe-4S] cluster contacts are provided by Cys-151 and Cys-154.

Belongs to the NfuA family. Homodimer. [4Fe-4S] cluster is required as a cofactor.

In terms of biological role, involved in iron-sulfur cluster biogenesis. Binds a 4Fe-4S cluster, can transfer this cluster to apoproteins, and thereby intervenes in the maturation of Fe/S proteins. Could also act as a scaffold/chaperone for damaged Fe/S proteins. This chain is Fe/S biogenesis protein NfuA, found in Xanthomonas euvesicatoria pv. vesicatoria (strain 85-10) (Xanthomonas campestris pv. vesicatoria).